A 247-amino-acid chain; its full sequence is UDP-N-acetyl-D-mannosaminuronic acid transferase (247 aa).

It belongs to the glycosyltransferase 26 family.

It catalyses the reaction UDP-N-acetyl-alpha-D-mannosaminouronate + N-acetyl-alpha-D-glucosaminyl-di-trans,octa-cis-undecaprenyl diphosphate = beta-D-ManNAcA-(1-&gt;4)-alpha-D-GlcNAc-di-trans,octa-cis-undecaprenyl diphosphate + UDP + H(+). It functions in the pathway bacterial outer membrane biogenesis; enterobacterial common antigen biosynthesis. Its function is as follows. Catalyzes the synthesis of Und-PP-GlcNAc-ManNAcA (Lipid II), the second lipid-linked intermediate involved in enterobacterial common antigen (ECA) synthesis. This chain is UDP-N-acetyl-D-mannosaminuronic acid transferase, found in Enterobacter sp. (strain 638).